Consider the following 98-residue polypeptide: Aspartyl/glutamyl-tRNA(Asn/Gln) amidotransferase subunit C (98 aa).

The protein belongs to the GatC family. As to quaternary structure, heterotrimer of A, B and C subunits.

The enzyme catalyses L-glutamyl-tRNA(Gln) + L-glutamine + ATP + H2O = L-glutaminyl-tRNA(Gln) + L-glutamate + ADP + phosphate + H(+). It catalyses the reaction L-aspartyl-tRNA(Asn) + L-glutamine + ATP + H2O = L-asparaginyl-tRNA(Asn) + L-glutamate + ADP + phosphate + 2 H(+). Functionally, allows the formation of correctly charged Asn-tRNA(Asn) or Gln-tRNA(Gln) through the transamidation of misacylated Asp-tRNA(Asn) or Glu-tRNA(Gln) in organisms which lack either or both of asparaginyl-tRNA or glutaminyl-tRNA synthetases. The reaction takes place in the presence of glutamine and ATP through an activated phospho-Asp-tRNA(Asn) or phospho-Glu-tRNA(Gln). In Mycobacterium avium (strain 104), this protein is Aspartyl/glutamyl-tRNA(Asn/Gln) amidotransferase subunit C.